A 214-amino-acid chain; its full sequence is Pyrrolidone-carboxylate peptidase (214 aa).

Active-site residues include Glu-79, Cys-142, and His-166.

Belongs to the peptidase C15 family. As to quaternary structure, homotetramer.

It is found in the cytoplasm. It catalyses the reaction Release of an N-terminal pyroglutamyl group from a polypeptide, the second amino acid generally not being Pro.. Its function is as follows. Removes 5-oxoproline from various penultimate amino acid residues except L-proline. The protein is Pyrrolidone-carboxylate peptidase of Fusobacterium nucleatum subsp. nucleatum (strain ATCC 25586 / DSM 15643 / BCRC 10681 / CIP 101130 / JCM 8532 / KCTC 2640 / LMG 13131 / VPI 4355).